Reading from the N-terminus, the 1809-residue chain is Pyochelin synthetase PchF (1809 aa).

Positions 69 to 490 (FPLTPVQAAY…GLLRRLAQSP (422 aa)) are condensation/cyclization. Residues 520 to 915 (FAERALLTPD…GREDDQVKIR (396 aa)) are adenylation. Residues 1407-1488 (APADELESAL…GLAERLRSAP (82 aa)) form the Carrier domain. At serine 1442 the chain carries O-(pantetheine 4'-phosphoryl)serine. Positions 1584–1797 (LGRRYAEALH…FDCLGEALAQ (214 aa)) are thioesterase.

This sequence belongs to the NRP synthetase family. The cofactor is pantetheine 4'-phosphate.

It carries out the reaction holo-[peptidyl-carrier protein] + L-cysteine + ATP = L-cysteinyl-[peptidyl-carrier protein] + AMP + diphosphate. Its pathway is siderophore biosynthesis. In terms of biological role, involved in the biosynthesis of the siderophore pyochelin. Adenylates L-cysteine and loads it onto its peptidyl carrier domain via a thioester linkage to the phosphopanthetheine moiety. Then forms a peptide bond between the salicyl-thiazolinyl intermediate bound to the second carrier domain of PchE and the cysteine bound to its own peptidyl carrier domain to form the salicyl-thiazolinyl-cysteinyl-S-PCP2 intermediate. It subsequently cyclizes the C-terminal cysteine to form the second thiazoline heterocycle in the salicyl-thiazolinyl-thiazolinyl-S-PCP2 intermediate. When this intermediate is released by the action of a thioesterase, it produces the tricyclic acid hydroxyphenyl-thiazolyl-thiazolinyl-carboxylic acid (HPTT-COOH), an advanced intermediate containing the aryl-4,2-bis-heterocyclic skeleton of the bithiazoline class of siderophores. This chain is Pyochelin synthetase PchF, found in Pseudomonas aeruginosa (strain UCBPP-PA14).